The following is an 805-amino-acid chain: U-box domain-containing protein 32 (805 aa).

2 disordered regions span residues 181-205 (SNNR…SEKL) and 226-284 (EKDT…EREG). The span at 226-239 (EKDTGQLEREKVEP) shows a compositional bias: basic and acidic residues. The segment covering 245-257 (FSSGSSSSFGEPV) has biased composition (low complexity). A coiled-coil region spans residues 331 to 434 (LEGLCIKESS…EVNALRRLVK (104 aa)). The 259-residue stretch at 460–718 (FDPSWKLGEG…FIDRMKAPEV (259 aa)) folds into the Protein kinase domain. ATP is bound by residues 466–474 (LGEGKYGSV) and K487. Residues 734-805 (RPPSHYLCPI…LAIQDWQNQW (72 aa)) enclose the U-box domain.

The protein belongs to the protein kinase superfamily. Ser/Thr protein kinase family.

It carries out the reaction S-ubiquitinyl-[E2 ubiquitin-conjugating enzyme]-L-cysteine + [acceptor protein]-L-lysine = [E2 ubiquitin-conjugating enzyme]-L-cysteine + N(6)-ubiquitinyl-[acceptor protein]-L-lysine.. The protein operates within protein modification; protein ubiquitination. In terms of biological role, functions as an E3 ubiquitin ligase. This is U-box domain-containing protein 32 (PUB32) from Arabidopsis thaliana (Mouse-ear cress).